The primary structure comprises 570 residues: Urease subunit alpha (570 aa).

Residues Gly131–Phe570 form the Urease domain. Residues His136, His138, and Lys219 each coordinate Ni(2+). An N6-carboxylysine modification is found at Lys219. His221 contributes to the substrate binding site. 2 residues coordinate Ni(2+): His248 and His274. The active-site Proton donor is His322. Asp362 contributes to the Ni(2+) binding site.

The protein belongs to the metallo-dependent hydrolases superfamily. Urease alpha subunit family. In terms of assembly, heterotrimer of UreA (gamma), UreB (beta) and UreC (alpha) subunits. Three heterotrimers associate to form the active enzyme. Ni cation serves as cofactor. Carboxylation allows a single lysine to coordinate two nickel ions.

The protein resides in the cytoplasm. It catalyses the reaction urea + 2 H2O + H(+) = hydrogencarbonate + 2 NH4(+). The protein operates within nitrogen metabolism; urea degradation; CO(2) and NH(3) from urea (urease route): step 1/1. The protein is Urease subunit alpha of Sinorhizobium fredii (strain NBRC 101917 / NGR234).